We begin with the raw amino-acid sequence, 348 residues long: Olfactory receptor 2T4 (348 aa).

Residues 1–57 (MDNITWMASHTGWSDFILMGLFRQSKHPMANITWMANHTGWSDFILLGLFRQSKHPA) lie on the Extracellular side of the membrane. Residues Asn-31 and Asn-37 are each glycosylated (N-linked (GlcNAc...) asparagine). The helical transmembrane segment at 58–81 (LLCVVIFVVFLMALSGNAVLILLI) threads the bilayer. The Cytoplasmic portion of the chain corresponds to 82 to 89 (HCDAHLHT). Residues 90 to 111 (PMYFFISQLSLMDMAYISVTVP) form a helical membrane-spanning segment. At 112–132 (KMLLDQVMGVNKISAPECGMQ) the chain is on the extracellular side. A disulfide bridge links Cys-129 with Cys-221. A helical transmembrane segment spans residues 133 to 152 (MFFYVTLAGSEFFLLATMAY). The Cytoplasmic segment spans residues 153-171 (DRYVAICHPLRYPVLMNHR). The chain crosses the membrane as a helical span at residues 172-190 (VCLFLSSGCWFLGSVDGFT). Residues 191–227 (FTPITMTFPFRGSREIHHFFCEVPAVLNLSCSDTSLY) are Extracellular-facing. Residue Asn-218 is glycosylated (N-linked (GlcNAc...) asparagine). A helical transmembrane segment spans residues 228–251 (EIFMYLCCVLMLLIPVVIISSSYL). The Cytoplasmic segment spans residues 252 to 268 (LILLTIHGMNSAEGRKK). A helical transmembrane segment spans residues 269-291 (AFATCSSHLTVVILFYGAAIYTY). The Extracellular portion of the chain corresponds to 292–304 (MLPSSYHTPEKDM). A helical transmembrane segment spans residues 305 to 324 (MVSVFYTILTPVVNPLIYSL). Topologically, residues 325–348 (RNKDVMGALKKMLTVEPAFQKAME) are cytoplasmic.

Belongs to the G-protein coupled receptor 1 family.

Its subcellular location is the cell membrane. Its function is as follows. Odorant receptor. This chain is Olfactory receptor 2T4 (OR2T4), found in Homo sapiens (Human).